The primary structure comprises 194 residues: Probable RNA polymerase sigma factor HI_1459 (194 aa).

The Polymerase core binding signature appears at 45–58; it reads DLVQEAFLSAFKNL. The segment at residues 161 to 180 is a DNA-binding region (H-T-H motif); sequence SEEICQETHLTSSNLHTTLY.

The protein belongs to the sigma-70 factor family. ECF subfamily.

This is Probable RNA polymerase sigma factor HI_1459 from Haemophilus influenzae (strain ATCC 51907 / DSM 11121 / KW20 / Rd).